A 1490-amino-acid chain; its full sequence is ABC transporter CDR4 (1490 aa).

Positions 1–12 (MADADTSSNSSK) are enriched in polar residues. 2 disordered regions span residues 1–26 (MADADTSSNSSKTNEDRSQEGFGTYQ) and 53–75 (LKRQHSRQESQKSNEQESELSGK). The Cytoplasmic segment spans residues 1–516 (MADADTSSNS…NILRIKGNPS (516 aa)). Positions 58 to 67 (SRQESQKSNE) are enriched in basic and acidic residues. An ABC transporter 1 domain is found at 151-407 (PKYLSLFFRE…FIDMGYECPQ (257 aa)). The next 6 helical transmembrane spans lie at 517–537 (IHLFQIFGNIGMSFILSSIFY), 551–571 (AALFFAVLFNAFSCLLEIFSL), 601–621 (LPTKFIIAIGFNLVYYFMVNF), 626–646 (GNFFFYLLINFSATLAMSHIF), 659–679 (AMTPAAILLLALTIFTGFVIP), and 767–787 (FGIVIGFIVFFFCTYILLCEI). At 788–1182 (NKGAMQKGEI…VFEQNWRTPS (395 aa)) the chain is on the cytoplasmic side. Residues 846 to 1090 (FFWRDLTYQV…LINYFEKYGA (245 aa)) form the ABC transporter 2 domain. 882 to 889 (GASGAGKT) serves as a coordination point for ATP. Helical transmembrane passes span 1183–1203 (YLYSKFLLVVTSSLFNGFSFY), 1217–1237 (FSVFMFLVILHTLIQQYLPTF), and 1268–1288 (IPWNIICGTLGYFCWYYPVGL). Asn1291 carries an N-linked (GlcNAc...) asparagine glycan. Transmembrane regions (helical) follow at residues 1304–1324 (FMWFAIVLFFIYTSTLAQLCI), 1333–1353 (AANLSVLLFTMCLAFCGVLVT), and 1370–1390 (FTYLVSVMLSVGLVDAPVTCA). Asn1424 carries an N-linked (GlcNAc...) asparagine glycan. Residues 1455–1475 (IGIYIAFIGINIIGTFILYWF) form a helical membrane-spanning segment.

Belongs to the ABC transporter superfamily. ABCG family. PDR (TC 3.A.1.205) subfamily.

The protein resides in the membrane. In Candida albicans (Yeast), this protein is ABC transporter CDR4 (CDR4).